The chain runs to 524 residues: GMP synthase [glutamine-hydrolyzing] (524 aa).

Positions Arg9–Asn207 constitute a Glutamine amidotransferase type-1 domain. The active-site Nucleophile is Cys86. Active-site residues include His181 and Glu183. In terms of domain architecture, GMPS ATP-PPase spans Trp208–Arg399. Position 235–241 (Ser235–Ala241) interacts with ATP.

As to quaternary structure, homodimer.

It catalyses the reaction XMP + L-glutamine + ATP + H2O = GMP + L-glutamate + AMP + diphosphate + 2 H(+). Its pathway is purine metabolism; GMP biosynthesis; GMP from XMP (L-Gln route): step 1/1. Functionally, catalyzes the synthesis of GMP from XMP. This chain is GMP synthase [glutamine-hydrolyzing], found in Coxiella burnetii (strain CbuG_Q212) (Coxiella burnetii (strain Q212)).